The chain runs to 483 residues: Pre-glycoprotein polyprotein GP complex (483 aa).

Glycine 2 carries N-myristoyl glycine; by host lipidation. At 2–17 the chain is on the extracellular side; that stretch reads GQFISFMQEIPIFLQE. Residues 18 to 32 traverse the membrane as a helical segment; that stretch reads ALNIALVAVSLICIV. A topological domain (cytoplasmic) is located at residue lysine 33. Residues 34–53 traverse the membrane as a helical segment; the sequence is GLVNLYRCGLFQLMVFLVLA. Extracellular segments follow at residues 54–58 and 59–422; these read GRSCS and EETF…TLVD. Cysteine 57 provides a ligand contact to Zn(2+). N-linked (GlcNAc...) asparagine; by host glycosylation is found at asparagine 83 and asparagine 95. Intrachain disulfides connect cysteine 92-cysteine 224, cysteine 134-cysteine 162, cysteine 205-cysteine 211, cysteine 269-cysteine 282, cysteine 291-cysteine 300, and cysteine 354-cysteine 375. N-linked (GlcNAc...) asparagine; by host glycosylation is found at asparagine 164 and asparagine 176. 4 N-linked (GlcNAc...) asparagine; by host glycosylation sites follow: asparagine 355, asparagine 363, asparagine 380, and asparagine 385. Residues 423–443 form a helical membrane-spanning segment; the sequence is ICFWSTVFFTSTLFLHLIGFP. The Cytoplasmic portion of the chain corresponds to 444–483; that stretch reads THEHIRGEGCPLPHRLNSMGGCRCGKYLPLKKPTIWHRRH. Residues histidine 445, histidine 447, cysteine 453, histidine 457, cysteine 465, cysteine 467, and histidine 483 each coordinate Zn(2+).

It belongs to the arenaviridae GPC protein family. Homotetramer; disulfide-linked. In terms of assembly, homotetramer. GP2 homotetramers bind through ionic interactions with GP1 homotetramers to form the GP complex together with the stable signal peptide. The GP-C polyprotein interacts with the host protease MBTPS1/SKI-1 resulting in the polyprotein processing. Specific enzymatic cleavages in vivo yield mature proteins. GP-C polyprotein is cleaved in the endoplasmic reticulum by the host protease MBTPS1. Only cleaved glycoprotein is incorporated into virions. In terms of processing, the SSP remains stably associated with the GP complex following cleavage by signal peptidase and plays crucial roles in the trafficking of GP through the secretory pathway. Post-translationally, myristoylation is necessary for GP2-mediated fusion activity.

The protein resides in the virion membrane. Its subcellular location is the host endoplasmic reticulum membrane. It localises to the host Golgi apparatus membrane. It is found in the host cell membrane. Class I viral fusion protein that directs fusion of viral and host endosomal membranes, leading to delivery of the nucleocapsid into the cytoplasm. Membrane fusion is mediated by irreversible conformational changes induced upon acidification in the endosome. Its function is as follows. Stable signal peptide (SSP): cleaved and functions as a signal peptide. In addition, it is also retained as the third component of the GP complex. The SSP is required for efficient glycoprotein expression, post-translational maturation cleavage of GP1 and GP2, glycoprotein transport to the cell surface plasma membrane, formation of infectious virus particles, and acid pH-dependent glycoprotein-mediated cell fusion. In terms of biological role, interacts with the host receptor. In Artibeus (neotropical fruit bats), this protein is Pre-glycoprotein polyprotein GP complex.